The sequence spans 51 residues: uncharacterized protein (51 aa).

This is an uncharacterized protein from Enterobacteria phage T4 (Bacteriophage T4).